The following is a 423-amino-acid chain: E3 ubiquitin-protein ligase makorin-2 (423 aa).

C3H1-type zinc fingers lie at residues 2-29 and 31-58; these read STKQ…HDLN and SKPS…HIKP. The tract at residues 59–90 is disordered; sequence SSRGGGGGAPEDQAGGGGAGGGGAGIGGAGGG. The segment covering 61–90 has biased composition (gly residues); sequence RGGGGGAPEDQAGGGGAGGGGAGIGGAGGG. Residues 162–189 form a C3H1-type 3 zinc finger; it reads QNLPQLCPYAANGHCFYEENCTYLHGDL. The tract at residues 190–219 is makorin-type Cys-His; it reads CEVCGLQVLHPHDSEQRRAHEKMCLAAFEA. An RING-type zinc finger spans residues 235–289; the sequence is CSICMEVVVQKANPSDRRFGILSSCCHTFCLACIRKWRCTRTFSNTIIKSCPECR. A C3H1-type 4 zinc finger spans residues 318–347; the sequence is GVSKKACKYFDQGRGSCPFGGKCLYLHAFP.

The protein resides in the cytoplasm. It is found in the nucleus. The enzyme catalyses S-ubiquitinyl-[E2 ubiquitin-conjugating enzyme]-L-cysteine + [acceptor protein]-L-lysine = [E2 ubiquitin-conjugating enzyme]-L-cysteine + N(6)-ubiquitinyl-[acceptor protein]-L-lysine.. It functions in the pathway protein modification; protein ubiquitination. E3 ubiquitin ligase catalyzing the covalent attachment of ubiquitin moieties onto substrate proteins. Inhibits neurogenesis and axis formation during embryonic development by modulating the phosphatidylinositol 3-kinase (PI3K) pathway. Acts downstream of PI3K and akt1 to up-regulate gsk3b mRNA expression. This is E3 ubiquitin-protein ligase makorin-2 (mkrn2) from Seriola quinqueradiata (Five-ray yellowtail).